A 555-amino-acid chain; its full sequence is Probable metabolite transport protein YDR387C (555 aa).

Residues 1-39 are Cytoplasmic-facing; that stretch reads MSTDESEDVYSDLYSIISQVTSNTANDIEQLPYALTFKT. A helical membrane pass occupies residues 40–60; sequence SLIFVGATIGGLLFGYDTGVI. At 61-83 the chain is on the extracellular side; that stretch reads SGVLLSLKPEDLSLVVLTDVQKE. The helical transmembrane segment at 84–104 threads the bilayer; sequence LITSSTSVGSFFGSILAFPLA. Topologically, residues 105–118 are cytoplasmic; it reads DRYGRRITLAICCS. The helical transmembrane segment at 119 to 139 threads the bilayer; it reads IFILAAIGMAIARTLTFLICG. R140 is a topological domain (extracellular). The helical transmembrane segment at 141–161 threads the bilayer; that stretch reads LLVGIAVGVSAQCVPLFLSEI. At 162–168 the chain is on the cytoplasmic side; it reads SPSRIRG. The chain crosses the membrane as a helical span at residues 169–189; that stretch reads FMLTLNIIAITGGQLVSYVIA. Residues 190–200 are Extracellular-facing; sequence SLMKEIDNSWR. The helical transmembrane segment at 201 to 221 threads the bilayer; that stretch reads YLFALSAIPAILFLSILDFIP. At 222–356 the chain is on the cytoplasmic side; sequence ESPRWSISKG…TIRALIVGCM (135 aa). The interval 289–313 is disordered; it reads SSTSGTLSPPNIKRLSSNTERTSNT. The chain crosses the membrane as a helical span at residues 357–377; that stretch reads LMFFQQITGFNAFMYYAAIIF. Residues 378 to 384 lie on the Extracellular side of the membrane; it reads SKFNIKN. Residues 385-405 traverse the membrane as a helical segment; sequence PLLPPILIASTNFIFTFFAMY. The Cytoplasmic segment spans residues 406–413; it reads TMDSLGRR. The helical transmembrane segment at 414–434 threads the bilayer; sequence AILLRTILIMTVGLLLCSVGF. Over 435–440 the chain is Extracellular; sequence GHDQVN. A helical transmembrane segment spans residues 441–461; sequence LLLISVVIYVAAYASAMGSVP. At 462-474 the chain is on the cytoplasmic side; that stretch reads WTCVEFLPLNRRS. The chain crosses the membrane as a helical span at residues 475–497; it reads FGASCIACTNWLTNAFVSMTYLS. At 498 to 506 the chain is on the extracellular side; sequence TINTIGDEN. The chain crosses the membrane as a helical span at residues 507–527; that stretch reads TMLIFAFFTVCAWFFVYFWYP. At 528–555 the chain is on the cytoplasmic side; that stretch reads EVKGLSLEEVGRVFDNGIDVHYVFRTYH.

The protein belongs to the major facilitator superfamily. Sugar transporter (TC 2.A.1.1) family.

The protein localises to the membrane. This Saccharomyces cerevisiae (strain ATCC 204508 / S288c) (Baker's yeast) protein is Probable metabolite transport protein YDR387C.